Reading from the N-terminus, the 417-residue chain is Tryptophan synthase beta chain (417 aa).

Position 110 is an N6-(pyridoxal phosphate)lysine (Lys110).

The protein belongs to the TrpB family. Tetramer of two alpha and two beta chains. It depends on pyridoxal 5'-phosphate as a cofactor.

The enzyme catalyses (1S,2R)-1-C-(indol-3-yl)glycerol 3-phosphate + L-serine = D-glyceraldehyde 3-phosphate + L-tryptophan + H2O. Its pathway is amino-acid biosynthesis; L-tryptophan biosynthesis; L-tryptophan from chorismate: step 5/5. Functionally, the beta subunit is responsible for the synthesis of L-tryptophan from indole and L-serine. The polypeptide is Tryptophan synthase beta chain (Prochlorococcus marinus (strain NATL2A)).